The following is a 66-amino-acid chain: Toxin BomPI (66 aa).

The LCN-type CS-alpha/beta domain maps to 2-64 (RDAYIAQPEN…VPIRIEGKCH (63 aa)). 4 disulfide bridges follow: Cys12–Cys63, Cys16–Cys36, Cys22–Cys46, and Cys26–Cys48.

This sequence belongs to the long (4 C-C) scorpion toxin superfamily. Sodium channel inhibitor family. Alpha subfamily. In terms of tissue distribution, expressed by the venom gland.

The protein resides in the secreted. Its function is as follows. Alpha toxins bind voltage-independently at site-3 of sodium channels (Nav) and inhibit the inactivation of the activated channels, thereby blocking neuronal transmission. This chain is Toxin BomPI, found in Buthus occitanus mardochei (Moroccan scorpion).